We begin with the raw amino-acid sequence, 94 residues long: Small ribosomal subunit protein uS19 (94 aa).

This sequence belongs to the universal ribosomal protein uS19 family.

In terms of biological role, protein S19 forms a complex with S13 that binds strongly to the 16S ribosomal RNA. This is Small ribosomal subunit protein uS19 from Anaplasma phagocytophilum (strain HZ).